Here is a 121-residue protein sequence, read N- to C-terminus: UPF0102 protein Xfasm12_1748 (121 aa).

It belongs to the UPF0102 family.

In Xylella fastidiosa (strain M12), this protein is UPF0102 protein Xfasm12_1748.